The following is a 219-amino-acid chain: Thiamine-phosphate synthase (219 aa).

Residues 45-49 and Asn77 each bind 4-amino-2-methyl-5-(diphosphooxymethyl)pyrimidine; that span reads QYREK. Residues Asp78 and Asp97 each coordinate Mg(2+). Thr116 serves as a coordination point for 4-amino-2-methyl-5-(diphosphooxymethyl)pyrimidine. 142 to 144 is a binding site for 2-[(2R,5Z)-2-carboxy-4-methylthiazol-5(2H)-ylidene]ethyl phosphate; it reads SFT. Lys145 contacts 4-amino-2-methyl-5-(diphosphooxymethyl)pyrimidine. Residues Gly173 and 193–194 each bind 2-[(2R,5Z)-2-carboxy-4-methylthiazol-5(2H)-ylidene]ethyl phosphate; that span reads VT.

This sequence belongs to the thiamine-phosphate synthase family. It depends on Mg(2+) as a cofactor.

It catalyses the reaction 2-[(2R,5Z)-2-carboxy-4-methylthiazol-5(2H)-ylidene]ethyl phosphate + 4-amino-2-methyl-5-(diphosphooxymethyl)pyrimidine + 2 H(+) = thiamine phosphate + CO2 + diphosphate. The catalysed reaction is 2-(2-carboxy-4-methylthiazol-5-yl)ethyl phosphate + 4-amino-2-methyl-5-(diphosphooxymethyl)pyrimidine + 2 H(+) = thiamine phosphate + CO2 + diphosphate. The enzyme catalyses 4-methyl-5-(2-phosphooxyethyl)-thiazole + 4-amino-2-methyl-5-(diphosphooxymethyl)pyrimidine + H(+) = thiamine phosphate + diphosphate. It participates in cofactor biosynthesis; thiamine diphosphate biosynthesis; thiamine phosphate from 4-amino-2-methyl-5-diphosphomethylpyrimidine and 4-methyl-5-(2-phosphoethyl)-thiazole: step 1/1. Condenses 4-methyl-5-(beta-hydroxyethyl)thiazole monophosphate (THZ-P) and 2-methyl-4-amino-5-hydroxymethyl pyrimidine pyrophosphate (HMP-PP) to form thiamine monophosphate (TMP). The sequence is that of Thiamine-phosphate synthase from Caldicellulosiruptor bescii (strain ATCC BAA-1888 / DSM 6725 / KCTC 15123 / Z-1320) (Anaerocellum thermophilum).